The sequence spans 220 residues: MKINKYIDHTLLKADSVQSQIDQLLSEAKTHEFASVCVNPGWVSYCAEALKGSDVKVCTVVGFPLGATTPETKAFETKNAIENGADEIDMVLNIGKLKQGDYQAVEDDVRAVVEASGDKLVKVIIEACLLTDDEKIKACQLSVAAGADFVKTSTGFSTGGATISDVKLMRQTVGPEIGVKAAGGARSLEDALAFIEAGATRIGTSAGVKIINGEAVKGGY.

Asp-89 acts as the Proton donor/acceptor in catalysis. Lys-151 acts as the Schiff-base intermediate with acetaldehyde in catalysis. The active-site Proton donor/acceptor is Lys-180.

It belongs to the DeoC/FbaB aldolase family. DeoC type 1 subfamily.

The protein localises to the cytoplasm. It carries out the reaction 2-deoxy-D-ribose 5-phosphate = D-glyceraldehyde 3-phosphate + acetaldehyde. It functions in the pathway carbohydrate degradation; 2-deoxy-D-ribose 1-phosphate degradation; D-glyceraldehyde 3-phosphate and acetaldehyde from 2-deoxy-alpha-D-ribose 1-phosphate: step 2/2. Catalyzes a reversible aldol reaction between acetaldehyde and D-glyceraldehyde 3-phosphate to generate 2-deoxy-D-ribose 5-phosphate. In Streptococcus uberis (strain ATCC BAA-854 / 0140J), this protein is Deoxyribose-phosphate aldolase.